We begin with the raw amino-acid sequence, 506 residues long: Histidine--tRNA ligase, mitochondrial (506 aa).

A mitochondrion-targeting transit peptide spans 1 to 33; sequence MPLLGLLPRRAWASLLSQLLRPPCASCTGAVRC. Residue Ser-67 is modified to Phosphoserine. Residues 131 to 133, Arg-158, Gln-174, Asp-178, Arg-327, and 331 to 332 contribute to the L-histidine site; these read DLT and YY. Lys-444 is modified (N6-acetyllysine).

Belongs to the class-II aminoacyl-tRNA synthetase family. In terms of assembly, homodimer. In terms of tissue distribution, a high level expression is seen in the heart, kidney and skeletal muscle while a lower level expression is seen in the brain and liver.

The protein localises to the mitochondrion. It catalyses the reaction tRNA(His) + L-histidine + ATP = L-histidyl-tRNA(His) + AMP + diphosphate + H(+). Functionally, mitochondrial aminoacyl-tRNA synthetase that catalyzes the ATP-dependent ligation of histidine to the 3'-end of its cognate tRNA, via the formation of an aminoacyl-adenylate intermediate (His-AMP). In Homo sapiens (Human), this protein is Histidine--tRNA ligase, mitochondrial (HARS2).